Reading from the N-terminus, the 150-residue chain is Centrin-B (150 aa).

EF-hand domains follow at residues 12 to 46, 80 to 114, and 115 to 150; these read DQIS…LGCE, DSMS…IGEE, and CSDS…KKVL. Positions 128, 130, 132, and 139 each coordinate Ca(2+).

It belongs to the centrin family.

Its subcellular location is the cytoplasm. The protein localises to the cytoskeleton. It is found in the microtubule organizing center. The protein resides in the centrosome. Plays a fundamental role in microtubule-organizing center structure and function. The sequence is that of Centrin-B (cenB) from Dictyostelium discoideum (Social amoeba).